The chain runs to 76 residues: Small ribosomal subunit protein bS18 (76 aa).

Belongs to the bacterial ribosomal protein bS18 family. In terms of assembly, part of the 30S ribosomal subunit. Forms a tight heterodimer with protein bS6.

In terms of biological role, binds as a heterodimer with protein bS6 to the central domain of the 16S rRNA, where it helps stabilize the platform of the 30S subunit. The protein is Small ribosomal subunit protein bS18 of Xylella fastidiosa (strain 9a5c).